The chain runs to 466 residues: Soluble pyridine nucleotide transhydrogenase (466 aa).

36–45 (ERYQNVGGGC) contributes to the FAD binding site.

This sequence belongs to the class-I pyridine nucleotide-disulfide oxidoreductase family. Homooligomer; probable homooctamer. Requires FAD as cofactor.

Its subcellular location is the cytoplasm. It carries out the reaction NAD(+) + NADPH = NADH + NADP(+). Conversion of NADPH, generated by peripheral catabolic pathways, to NADH, which can enter the respiratory chain for energy generation. The sequence is that of Soluble pyridine nucleotide transhydrogenase from Shigella flexneri.